The primary structure comprises 495 residues: MAKKYVVALDQGTTSSRAIIFDHDANIVSVSQREFPQIYPQAGWVEHDPMEIWASQSSTLIELLARSGIHGSEVAAIGITNQRETTVIWDKLTGKPVYNAIVWQCRRSSHICDELKAQGLEDYVRETTGLLLDPYFSGTKIKWILDNVAGVRERAEKGELLFGTIDTWLVWKLTEGKVHVTDPTNASRTLLFNIHTQQWDSKLLEALNIPESLLPEVKPSCAVYGKTRIAGEGGEISIAGIAGDQQSALFGQLCIDEGMAKNTYGTGCFLLMNTGKQAVKSTHGLLTTVAIGADCEVNYALEGAVFMGGATIQWLRDELGLIRDAQDTEYFASKVEDTNGVYLVPAFVGLGAPYWDPNARGALVGLTRGSNRNHIIRAALEAIAYQSRDLLDAMAKDSGVMLKQLKVDGGAVSNDFLMQFQADITNVEVQRPAITETTAMGAAFLAGLAVGFWSSTSELKHKADIERTFIPSISAEKCDELYCGWNRAVTQTIKS.

Residue Thr-13 coordinates ADP. Thr-13, Thr-14, and Ser-15 together coordinate ATP. Thr-13 contributes to the sn-glycerol 3-phosphate binding site. Arg-17 is a binding site for ADP. 4 residues coordinate sn-glycerol 3-phosphate: Arg-83, Glu-84, Tyr-135, and Asp-244. Residues Arg-83, Glu-84, Tyr-135, Asp-244, and Gln-245 each contribute to the glycerol site. 2 residues coordinate ADP: Thr-266 and Gly-309. Residues Thr-266, Gly-309, Gln-313, and Gly-410 each coordinate ATP. ADP-binding residues include Gly-410 and Asn-414.

Belongs to the FGGY kinase family.

The enzyme catalyses glycerol + ATP = sn-glycerol 3-phosphate + ADP + H(+). Its pathway is polyol metabolism; glycerol degradation via glycerol kinase pathway; sn-glycerol 3-phosphate from glycerol: step 1/1. Inhibited by fructose 1,6-bisphosphate (FBP). In terms of biological role, key enzyme in the regulation of glycerol uptake and metabolism. Catalyzes the phosphorylation of glycerol to yield sn-glycerol 3-phosphate. This chain is Glycerol kinase, found in Shewanella sediminis (strain HAW-EB3).